Reading from the N-terminus, the 45-residue chain is Large ribosomal subunit protein bL34 (45 aa).

A disordered region spans residues 1–45; it reads MTKRTFGGTSRKRKRVSGFRVRMRSHTGRRVVRTRRKRGRSRLTV. Residues 10–45 show a composition bias toward basic residues; it reads SRKRKRVSGFRVRMRSHTGRRVVRTRRKRGRSRLTV.

Belongs to the bacterial ribosomal protein bL34 family.

This Prochlorococcus marinus (strain NATL2A) protein is Large ribosomal subunit protein bL34.